Reading from the N-terminus, the 103-residue chain is Large ribosomal subunit protein bL21 (103 aa).

The protein belongs to the bacterial ribosomal protein bL21 family. As to quaternary structure, part of the 50S ribosomal subunit. Contacts protein L20.

Its function is as follows. This protein binds to 23S rRNA in the presence of protein L20. The protein is Large ribosomal subunit protein bL21 of Vibrio cholerae serotype O1 (strain ATCC 39541 / Classical Ogawa 395 / O395).